The sequence spans 473 residues: Arginine biosynthesis bifunctional protein ArgJ, mitochondrial (473 aa).

The substrate site is built by Thr201, Lys230, Thr241, Glu328, Asn468, and Thr473. The active-site Nucleophile is Thr241.

Belongs to the ArgJ family. In terms of assembly, heterodimer of an alpha and a beta chain. Post-translationally, the alpha and beta chains are autoproteolytically processed from a single precursor protein within the mitochondrion.

The protein localises to the mitochondrion matrix. It catalyses the reaction N(2)-acetyl-L-ornithine + L-glutamate = N-acetyl-L-glutamate + L-ornithine. The enzyme catalyses L-glutamate + acetyl-CoA = N-acetyl-L-glutamate + CoA + H(+). Its pathway is amino-acid biosynthesis; L-arginine biosynthesis; L-ornithine and N-acetyl-L-glutamate from L-glutamate and N(2)-acetyl-L-ornithine (cyclic): step 1/1. The protein operates within amino-acid biosynthesis; L-arginine biosynthesis; N(2)-acetyl-L-ornithine from L-glutamate: step 1/4. Catalyzes two activities which are involved in the cyclic version of arginine biosynthesis: the synthesis of acetylglutamate from glutamate and acetyl-CoA, and of ornithine by transacetylation between acetylornithine and glutamate. The protein is Arginine biosynthesis bifunctional protein ArgJ, mitochondrial of Ajellomyces capsulatus (strain G186AR / H82 / ATCC MYA-2454 / RMSCC 2432) (Darling's disease fungus).